A 161-amino-acid polypeptide reads, in one-letter code: Large ribosomal subunit protein uL11 (161 aa).

It belongs to the universal ribosomal protein uL11 family. Part of the ribosomal stalk of the 50S ribosomal subunit. Interacts with L10 and the large rRNA to form the base of the stalk. L10 forms an elongated spine to which L12 dimers bind in a sequential fashion forming a multimeric L10(L12)X complex.

Its function is as follows. Forms part of the ribosomal stalk which helps the ribosome interact with GTP-bound translation factors. In Methanocaldococcus jannaschii (strain ATCC 43067 / DSM 2661 / JAL-1 / JCM 10045 / NBRC 100440) (Methanococcus jannaschii), this protein is Large ribosomal subunit protein uL11.